A 239-amino-acid chain; its full sequence is Aspartate/glutamate leucyltransferase (239 aa).

Belongs to the R-transferase family. Bpt subfamily.

It is found in the cytoplasm. It catalyses the reaction N-terminal L-glutamyl-[protein] + L-leucyl-tRNA(Leu) = N-terminal L-leucyl-L-glutamyl-[protein] + tRNA(Leu) + H(+). The catalysed reaction is N-terminal L-aspartyl-[protein] + L-leucyl-tRNA(Leu) = N-terminal L-leucyl-L-aspartyl-[protein] + tRNA(Leu) + H(+). Its function is as follows. Functions in the N-end rule pathway of protein degradation where it conjugates Leu from its aminoacyl-tRNA to the N-termini of proteins containing an N-terminal aspartate or glutamate. The protein is Aspartate/glutamate leucyltransferase of Campylobacter jejuni (strain RM1221).